The following is a 1455-amino-acid chain: DNA-directed RNA polymerase subunit beta (1455 aa).

It belongs to the RNA polymerase beta chain family. The RNAP catalytic core consists of 2 alpha, 1 beta, 1 beta' and 1 omega subunit. When a sigma factor is associated with the core the holoenzyme is formed, which can initiate transcription.

The catalysed reaction is RNA(n) + a ribonucleoside 5'-triphosphate = RNA(n+1) + diphosphate. Functionally, DNA-dependent RNA polymerase catalyzes the transcription of DNA into RNA using the four ribonucleoside triphosphates as substrates. This Rhizorhabdus wittichii (strain DSM 6014 / CCUG 31198 / JCM 15750 / NBRC 105917 / EY 4224 / RW1) (Sphingomonas wittichii) protein is DNA-directed RNA polymerase subunit beta.